The sequence spans 201 residues: Putative pseudouridine methyltransferase (201 aa).

2 residues coordinate S-adenosyl-L-methionine: methionine 132 and cysteine 186.

It belongs to the methyltransferase superfamily. TrmY family.

The protein localises to the cytoplasm. This Vibrio cholerae serotype O1 (strain ATCC 39315 / El Tor Inaba N16961) protein is Putative pseudouridine methyltransferase.